A 218-amino-acid polypeptide reads, in one-letter code: DNA endonuclease I-CeuI (218 aa).

Residues Gly65 and Glu66 each contribute to the Mg(2+) site. Residues 71–75 (ISTKK) form an interaction with DNA region. Asp86 contacts Mg(2+). Interaction with DNA regions lie at residues 90 to 94 (NVTQH), 114 to 116 (RHK), and 191 to 199 (KQQGQSNEG).

Belongs to the LAGLIDADG endonuclease family. In terms of assembly, homodimer. The cofactor is Mg(2+).

Its subcellular location is the plastid. It is found in the chloroplast. Functionally, endonuclease involved in intron homing. Recognizes a degenerate sequence of 17-19 bp to produce a staggered cut 5 bp downstream from the CeLSU.5 intron insertion site. This Chlamydomonas moewusii (Chlamydomonas eugametos) protein is DNA endonuclease I-CeuI.